A 406-amino-acid polypeptide reads, in one-letter code: Diaminopimelate decarboxylase (406 aa).

Residue Lys52 is modified to N6-(pyridoxal phosphate)lysine. Residues Gly231 and 265–268 (EPGR) contribute to the pyridoxal 5'-phosphate site. The substrate site is built by Arg268, Arg304, and Tyr308. Cys334 acts as the Proton donor in catalysis. Substrate-binding residues include Glu335 and Tyr362. Tyr362 provides a ligand contact to pyridoxal 5'-phosphate.

It belongs to the Orn/Lys/Arg decarboxylase class-II family. LysA subfamily. As to quaternary structure, homodimer. Requires pyridoxal 5'-phosphate as cofactor.

It carries out the reaction meso-2,6-diaminopimelate + H(+) = L-lysine + CO2. The protein operates within amino-acid biosynthesis; L-lysine biosynthesis via DAP pathway; L-lysine from DL-2,6-diaminopimelate: step 1/1. In terms of biological role, specifically catalyzes the decarboxylation of meso-diaminopimelate (meso-DAP) to L-lysine. The sequence is that of Diaminopimelate decarboxylase from Neisseria meningitidis serogroup A / serotype 4A (strain DSM 15465 / Z2491).